Consider the following 490-residue polypeptide: Betaine aldehyde dehydrogenase (490 aa).

Thr-26, Ile-27, and Asp-93 together coordinate K(+). Position 150-152 (150-152 (GAW)) interacts with NAD(+). The active-site Charge relay system is the Lys-162. 176–179 (KPSE) lines the NAD(+) pocket. Val-180 provides a ligand contact to K(+). 230-233 (GVAS) lines the NAD(+) pocket. K(+) is bound at residue Leu-246. Glu-252 acts as the Proton acceptor in catalysis. The NAD(+) site is built by Gly-254, Cys-286, and Glu-387. Cys-286 acts as the Nucleophile in catalysis. Cys-286 bears the Cysteine sulfenic acid (-SOH) mark. Positions 457 and 460 each coordinate K(+). Glu-464 functions as the Charge relay system in the catalytic mechanism.

The protein belongs to the aldehyde dehydrogenase family. Dimer of dimers. The cofactor is K(+).

The catalysed reaction is betaine aldehyde + NAD(+) + H2O = glycine betaine + NADH + 2 H(+). Its pathway is amine and polyamine biosynthesis; betaine biosynthesis via choline pathway; betaine from betaine aldehyde: step 1/1. Functionally, involved in the biosynthesis of the osmoprotectant glycine betaine. Catalyzes the irreversible oxidation of betaine aldehyde to the corresponding acid. The sequence is that of Betaine aldehyde dehydrogenase from Escherichia coli O7:K1 (strain IAI39 / ExPEC).